Here is a 341-residue protein sequence, read N- to C-terminus: Muscleblind-like protein 1 (341 aa).

Residue threonine 6 is modified to Phosphothreonine. C3H1-type zinc fingers lie at residues 13–41, 47–73, 178–206, and 214–240; these read WLTLEVCREFQRGTCSRPDTECKFAHPSK, NGRVIACFDSLKGRCSRENCKYLHPPP, TDRLEVCREYQRGNCNRGENDCRFAHPAD, and DNTVTVCMDYIKGRCSREKCKYFHPPA.

This sequence belongs to the muscleblind family. In terms of assembly, interacts with DDX1 and YBX1. Interacts with HNRNPH1; the interaction in RNA-independent. Interacts with RBPMS; the interaction allows cooperative assembly of RNA-bound stable cell-specific alternative splicing regulatory complexes. In terms of tissue distribution, highly expressed in cardiac and skeletal muscle. Weakly expressed in heart and eye (at protein level).

It is found in the nucleus. Its subcellular location is the cytoplasm. The protein localises to the cytoplasmic granule. Its function is as follows. Mediates pre-mRNA alternative splicing regulation. Acts either as activator or repressor of splicing on specific pre-mRNA targets. Inhibits cardiac troponin-T (TNNT2) pre-mRNA exon inclusion but induces insulin receptor (IR) pre-mRNA exon inclusion in muscle. Antagonizes the alternative splicing activity pattern of CELF proteins. Regulates the TNNT2 exon 5 skipping through competition with U2AF2. Inhibits the formation of the spliceosome A complex on intron 4 of TNNT2 pre-mRNA. Binds to the stem-loop structure within the polypyrimidine tract of TNNT2 intron 4 during spliceosome assembly. Binds to the 5'-YGCU(U/G)Y-3'consensus sequence. Binds to the IR RNA. Binds to CUG triplet repeat expansion in myotonic dystrophy muscle cells by sequestering the target RNAs. Together with RNA binding proteins RBPMS and RBFOX2, activates vascular smooth muscle cells alternative splicing events. Regulates NCOR2 alternative splicing. The sequence is that of Muscleblind-like protein 1 (Mbnl1) from Mus musculus (Mouse).